The sequence spans 98 residues: Aspartyl/glutamyl-tRNA(Asn/Gln) amidotransferase subunit C (98 aa).

Belongs to the GatC family. As to quaternary structure, heterotrimer of A, B and C subunits.

It catalyses the reaction L-glutamyl-tRNA(Gln) + L-glutamine + ATP + H2O = L-glutaminyl-tRNA(Gln) + L-glutamate + ADP + phosphate + H(+). The enzyme catalyses L-aspartyl-tRNA(Asn) + L-glutamine + ATP + H2O = L-asparaginyl-tRNA(Asn) + L-glutamate + ADP + phosphate + 2 H(+). Allows the formation of correctly charged Asn-tRNA(Asn) or Gln-tRNA(Gln) through the transamidation of misacylated Asp-tRNA(Asn) or Glu-tRNA(Gln) in organisms which lack either or both of asparaginyl-tRNA or glutaminyl-tRNA synthetases. The reaction takes place in the presence of glutamine and ATP through an activated phospho-Asp-tRNA(Asn) or phospho-Glu-tRNA(Gln). The protein is Aspartyl/glutamyl-tRNA(Asn/Gln) amidotransferase subunit C of Gloeothece citriformis (strain PCC 7424) (Cyanothece sp. (strain PCC 7424)).